The sequence spans 648 residues: Threonine--tRNA ligase (648 aa).

Positions 1 to 61 constitute a TGS domain; it reads MIKITLPDGS…TTDGSLVLYT (61 aa). The catalytic stretch occupies residues 240 to 539; the sequence is DHRKLGKELE…LLEHTAGNFP (300 aa). Residues Cys-335, His-386, and His-516 each contribute to the Zn(2+) site.

Belongs to the class-II aminoacyl-tRNA synthetase family. Homodimer. Zn(2+) is required as a cofactor.

It is found in the cytoplasm. The enzyme catalyses tRNA(Thr) + L-threonine + ATP = L-threonyl-tRNA(Thr) + AMP + diphosphate + H(+). Catalyzes the attachment of threonine to tRNA(Thr) in a two-step reaction: L-threonine is first activated by ATP to form Thr-AMP and then transferred to the acceptor end of tRNA(Thr). Also edits incorrectly charged L-seryl-tRNA(Thr). The polypeptide is Threonine--tRNA ligase (Flavobacterium psychrophilum (strain ATCC 49511 / DSM 21280 / CIP 103535 / JIP02/86)).